A 936-amino-acid polypeptide reads, in one-letter code: MDMPTPSNRAGCNGNTGGTMGPSDDPYGAAAMNLDCYSEIYSPSVADQLFSLLNDPAAHRMFAMWPSMGSSPCAAGTSEDMPLDAYSGLGEAVEEPSQIMSVNPTEAEKTGKSSGELGSDDGAHQGSSMVPRSVVGSSLADRMLMALSLFRESLGSGALAQVWMPVEQEGHVVLSTCEQPFLLDQVLAGYREVSRHFVFSAKEEPGLQPGLPGRVFISGVPEWTSSVLYYNRPEYLRMEHALHHEIRGSLAMPIYDPSKDSCCAVFELVTRKEKPDFSAEMDNVCNALQAVNLKATKGSSNQKFYTENQKFAFTEILDVLRAICHAHMLPLALTWVPTSNGIDGGYVVGKDGASFSQSGKTIIRIHESACYVNDGKMQGFLQACARRHLEKGQGIAGRALKSNLPFFSPDIREYSIEDYPLAHHARKFSLHAAVAIRLRSTYTGNDDYILEFFLPVSCKGSGEQQMLLNNLSSTMQRICKSLRTVYEAEVDNVNAGTAAVFRKNNESCLPTGHTESSSHGDQSITGASFEDTSLANKPGVMEPELAEQVQPSSIGHAEKKRSTAEKNISLDVLRKYFSGSLKDAAKSLGVCPTTLKRICRHHGISRWPSRKINKVNRSLKKIQTVINSVHGVDRSLQYDPATGSLVPVVSLPEKLTFPSCDGLPTPSVGKTVEENSDLKSEEGCSLPDGSQRQSCQLQISDVKKSNEDEFHIGSGNSDFYGANATAKSNSEVTQGPLCPTGAFSALHLKGTDCTNPSSSLRPSSESTRNQIVGRNSPSIQQEDLDMLDNHEAEDKDHMHPSTSGMTDSSSGSASSHPTFKQNTRSALKDAASPALTVKATYNGDTVRFKFLPSMGWYHLLEEIAKRFKLPTGAYQLKYKDDEDEWVILANDSDLQECVDVLDSIGSRIVKLQVRDLPCIVSSSGSSTCLQLAAHSS.

The disordered stretch occupies residues 99 to 130 (IMSVNPTEAEKTGKSSGELGSDDGAHQGSSMV). The region spanning 550-635 (QPSSIGHAEK…INSVHGVDRS (86 aa)) is the RWP-RK domain. Disordered stretches follow at residues 666–697 (PSVGKTVEENSDLKSEEGCSLPDGSQRQSCQL), 753–782 (CTNPSSSLRPSSESTRNQIVGRNSPSIQQE), and 794–827 (DKDHMHPSTSGMTDSSSGSASSHPTFKQNTRSAL). Over residues 671–682 (TVEENSDLKSEE) the composition is skewed to basic and acidic residues. Residues 688-697 (DGSQRQSCQL) are compositionally biased toward polar residues. Residues 754–769 (TNPSSSLRPSSESTRN) show a composition bias toward low complexity. Residues 770-781 (QIVGRNSPSIQQ) show a composition bias toward polar residues. A compositionally biased stretch (low complexity) spans 801-815 (STSGMTDSSSGSASS). Residues 816 to 825 (HPTFKQNTRS) are compositionally biased toward polar residues. Positions 834 to 916 (ALTVKATYNG…RIVKLQVRDL (83 aa)) constitute a PB1 domain.

It is found in the nucleus. In terms of biological role, probable transcription factor. The sequence is that of Protein NLP2 from Oryza sativa subsp. japonica (Rice).